The sequence spans 109 residues: Small ribosomal subunit protein uS17 (109 aa).

This sequence belongs to the universal ribosomal protein uS17 family. In terms of assembly, part of the 30S ribosomal subunit.

In terms of biological role, one of the primary rRNA binding proteins, it binds specifically to the 5'-end of 16S ribosomal RNA. The polypeptide is Small ribosomal subunit protein uS17 (Thermoplasma volcanium (strain ATCC 51530 / DSM 4299 / JCM 9571 / NBRC 15438 / GSS1)).